The chain runs to 443 residues: Aspartic protease PEP3 (443 aa).

The signal sequence occupies residues 1 to 36 (MQNRPRVFDSAMNLSPNMHFLSLMPGLLLLSLQVHT). A propeptide spans 37–107 (SPTPLKKTIR…NTVSKAMQAN (71 aa)) (activation peptide). The 318-residue stretch at 123 to 440 (YLSPVTIGGQ…DLRGPSLHVA (318 aa)) folds into the Peptidase A1 domain. Aspartate 139 is a catalytic residue. Asparagine 180 and asparagine 293 each carry an N-linked (GlcNAc...) asparagine glycan. Residue aspartate 327 is part of the active site. A disulfide bridge connects residues cysteine 363 and cysteine 403. N-linked (GlcNAc...) asparagine glycans are attached at residues asparagine 364 and asparagine 388.

Belongs to the peptidase A1 family. In terms of assembly, monomer.

The protein localises to the secreted. In terms of biological role, secreted aspartic endopeptidase that allows assimilation of proteinaceous substrates. The scissile peptide bond is attacked by a nucleophilic water molecule activated by two aspartic residues in the active site. Shows a broad primary substrate specificity. Favors hydrophobic residues at the P1 and P1' positions. This is Aspartic protease PEP3 from Coccidioides posadasii (strain C735) (Valley fever fungus).